A 78-amino-acid chain; its full sequence is NAD(P)H-quinone oxidoreductase subunit O (78 aa).

Belongs to the complex I NdhO subunit family. NDH-1 can be composed of about 15 different subunits; different subcomplexes with different compositions have been identified which probably have different functions.

The protein localises to the cellular thylakoid membrane. The catalysed reaction is a plastoquinone + NADH + (n+1) H(+)(in) = a plastoquinol + NAD(+) + n H(+)(out). It catalyses the reaction a plastoquinone + NADPH + (n+1) H(+)(in) = a plastoquinol + NADP(+) + n H(+)(out). In terms of biological role, NDH-1 shuttles electrons from an unknown electron donor, via FMN and iron-sulfur (Fe-S) centers, to quinones in the respiratory and/or the photosynthetic chain. The immediate electron acceptor for the enzyme in this species is believed to be plastoquinone. Couples the redox reaction to proton translocation, and thus conserves the redox energy in a proton gradient. Cyanobacterial NDH-1 also plays a role in inorganic carbon-concentration. This is NAD(P)H-quinone oxidoreductase subunit O from Prochlorococcus marinus (strain AS9601).